Reading from the N-terminus, the 61-residue chain is Large ribosomal subunit protein bL32 (61 aa).

Belongs to the bacterial ribosomal protein bL32 family.

The chain is Large ribosomal subunit protein bL32 from Cytophaga hutchinsonii (strain ATCC 33406 / DSM 1761 / CIP 103989 / NBRC 15051 / NCIMB 9469 / D465).